An 83-amino-acid polypeptide reads, in one-letter code: UPF0297 protein DSY2420 (83 aa).

It belongs to the UPF0297 family.

This is UPF0297 protein DSY2420 from Desulfitobacterium hafniense (strain Y51).